The sequence spans 547 residues: Alpha-1,3-mannosyl-glycoprotein 4-beta-N-acetylglucosaminyltransferase B (547 aa).

The Cytoplasmic portion of the chain corresponds to 1–7; sequence MRLRNGT. Residues 8–28 traverse the membrane as a helical; Signal-anchor for type II membrane protein segment; sequence FLTVLLFGLCGLISLSWYTAF. The Lumenal portion of the chain corresponds to 29–547; sequence SNSKGNVVDI…LSEIFIKKAE (519 aa). A coiled-coil region spans residues 36–83; it reads VDIYQREFLALRDRLHSAEQENLKRSKELNLVLDEIKRAIAEKQALRD. N-linked (GlcNAc...) asparagine glycans are attached at residues N85, N101, and N464.

This sequence belongs to the glycosyltransferase 54 family. Requires a divalent metal cation as cofactor. N-glycosylated.

The protein localises to the golgi apparatus membrane. It catalyses the reaction N(4)-{beta-D-GlcNAc-(1-&gt;2)-alpha-D-Man-(1-&gt;3)-[beta-D-GlcNAc-(1-&gt;2)-alpha-D-Man-(1-&gt;6)]-beta-D-Man-(1-&gt;4)-beta-D-GlcNAc-(1-&gt;4)-beta-D-GlcNAc}-L-asparaginyl-[protein] + UDP-N-acetyl-alpha-D-glucosamine = N(4)-{beta-D-GlcNAc-(1-&gt;2)-[beta-D-GlcNAc-(1-&gt;4)]-alpha-D-Man-(1-&gt;3)-[beta-D-GlcNAc-(1-&gt;2)-alpha-D-Man-(1-&gt;6)]-beta-D-Man-(1-&gt;4)-beta-D-GlcNAc-(1-&gt;4)-beta-D-GlcNAc}-L-asparaginyl-[protein] + UDP + H(+). The enzyme catalyses an N(4)-{beta-D-GlcNAc-(1-&gt;2)-alpha-D-Man-(1-&gt;3)-[alpha-D-Man-(1-&gt;6)]-beta-D-Man-(1-&gt;4)-beta-D-GlcNAc-(1-&gt;4)-beta-D-GlcNAc}-L-asparaginyl-[protein] + UDP-N-acetyl-alpha-D-glucosamine = an N(4)-{beta-D-GlcNAc-(1-&gt;2)-[beta-D-GlcNAc-(1-&gt;4)]-alpha-D-Man-(1-&gt;3)-[alpha-D-Man-(1-&gt;6)]-beta-D-Man-(1-&gt;4)-beta-D-GlcNAc-(1-&gt;4)-beta-D-GlcNAc}-L-asparaginyl-[protein] + UDP + H(+). It carries out the reaction an N(4)-{beta-D-GlcNAc-(1-&gt;2)-alpha-D-Man-(1-&gt;3)-[beta-D-GlcNAc-(1-&gt;2)-[beta-D-GlcNAc-(1-&gt;6)]-alpha-D-Man-(1-&gt;6)]-beta-D-Man-(1-&gt;4)-beta-D-GlcNAc-(1-&gt;4)-beta-D-GlcNAc}-L-asparaginyl-[protein] + UDP-N-acetyl-alpha-D-glucosamine = an N(4)-{beta-D-GlcNAc-(1-&gt;2)-[beta-D-GlcNAc-(1-&gt;4)]-alpha-D-Man-(1-&gt;3)-[beta-D-GlcNAc-(1-&gt;2)-[beta-D-GlcNAc-(1-&gt;6)]-alpha-D-Man-(1-&gt;6)]-beta-D-Man-(1-&gt;4)-beta-D-GlcNAc-(1-&gt;4)-beta-D-GlcNAc}-L-asparaginyl-[protein] + UDP + H(+). The catalysed reaction is an N(4)-{beta-D-GlcNAc-(1-&gt;2)-alpha-D-Man-(1-&gt;3)-[beta-D-GlcNAc-(1-&gt;2)-alpha-D-Man-(1-&gt;6)]-beta-D-Man-(1-&gt;4)-beta-D-GlcNAc-(1-&gt;4)-[alpha-L-Fuc-(1-&gt;6)]-beta-D-GlcNAc}-L-asparaginyl-[protein] + UDP-N-acetyl-alpha-D-glucosamine = N(4)-{beta-D-GlcNAc-(1-&gt;2)-[beta-D-GlcNAc-(1-&gt;4)]-alpha-D-Man-(1-&gt;3)-[beta-D-GlcNAc-(1-&gt;2)-alpha-D-Man-(1-&gt;6)]-beta-D-Man-(1-&gt;4)-beta-D-GlcNAc-(1-&gt;4)-[alpha-L-Fuc-(1-&gt;6)]-beta-D-GlcNAc}-asparaginyl-[protein] + UDP + H(+). It catalyses the reaction an N(4)-{beta-D-GlcNAc-(1-&gt;2)-alpha-D-Man-(1-&gt;3)-[beta-D-Gal-(1-&gt;4)-beta-D-GlcNAc-(1-&gt;2)-alpha-D-Man-(1-&gt;6)]-beta-D-Man-(1-&gt;4)-beta-D-GlcNAc-(1-&gt;4)-beta-D-GlcNAc}-L-asparaginyl-[protein] + UDP-N-acetyl-alpha-D-glucosamine = an N(4)-{beta-D-GlcNAc-(1-&gt;2)-[beta-D-GlcNAc-(1-&gt;4)]-alpha-D-Man-(1-&gt;3)-[beta-D-Gal-(1-&gt;4)-beta-D-GlcNAc-(1-&gt;2)-alpha-D-Man-(1-&gt;6)]-beta-D-Man-(1-&gt;4)-beta-D-GlcNAc-(1-&gt;4)-beta-D-GlcNAc}-L-asparaginyl-[protein] + UDP + H(+). The enzyme catalyses N(4)-{beta-D-GlcNAc-(1-&gt;2)-alpha-D-Man-(1-&gt;3)-[alpha-D-Man-(1-&gt;3)-{alpha-D-Man-(1-&gt;6)}-alpha-D-Man-(1-&gt;6)]-beta-D-Man-(1-&gt;4)-beta-D-GlcNAc-(1-&gt;4)-beta-D-GlcNAc}-asparaginyl-[protein] + UDP-N-acetyl-alpha-D-glucosamine = N(4)-{beta-D-GlcNAc-(1-&gt;2)-[beta-D-GlcNAc-(1-&gt;4)]-alpha-D-Man-(1-&gt;3)-[alpha-D-Man-(1-&gt;3)-{alpha-D-Man-(1-&gt;6)}-alpha-D-Man-(1-&gt;6)]-beta-D-Man-(1-&gt;4)-beta-D-GlcNAc-(1-&gt;4)-beta-D-GlcNAc}-asparaginyl-[protein] + UDP + H(+). It carries out the reaction N(4)-{beta-D-GlcNAc-(1-&gt;2)-alpha-D-Man-(1-&gt;3)-beta-D-Man-(1-&gt;4)-beta-D-GlcNAc-(1-&gt;4)-beta-D-GlcNAc}-asparaginyl-[protein] + UDP-N-acetyl-alpha-D-glucosamine = N(4)-{beta-D-GlcNAc-(1-&gt;2)-[beta-D-GlcNAc-(1-&gt;4)]-alpha-D-Man-(1-&gt;3)-beta-D-Man-(1-&gt;4)-beta-D-GlcNAc-(1-&gt;4)-beta-D-GlcNAc}-asparaginyl-[protein] + UDP + H(+). It functions in the pathway protein modification; protein glycosylation. Its function is as follows. Glycosyltransferase that catalyze the transfer of GlcNAc from UDP-GlcNAc to the GlcNAcbeta1-2Manalpha1-3 arm of the core structure of N-linked glycans through a beta1-4 linkage and participates in the production of tri- and tetra-antennary N-linked sugar chains. Prefers complex-type N-glycans over hybrid-types. Has lower affinities for donors or acceptors than MGAT4A, suggesting that, under physiological conditions, it is not the main contributor in N-glycan biosynthesis. The chain is Alpha-1,3-mannosyl-glycoprotein 4-beta-N-acetylglucosaminyltransferase B (mgat4bQ9UQ53) from Danio rerio (Zebrafish).